The sequence spans 343 residues: Ribosomal RNA small subunit methyltransferase C (343 aa).

The protein belongs to the methyltransferase superfamily. RsmC family. In terms of assembly, monomer.

It localises to the cytoplasm. It catalyses the reaction guanosine(1207) in 16S rRNA + S-adenosyl-L-methionine = N(2)-methylguanosine(1207) in 16S rRNA + S-adenosyl-L-homocysteine + H(+). Its function is as follows. Specifically methylates the guanine in position 1207 of 16S rRNA in the 30S particle. This is Ribosomal RNA small subunit methyltransferase C from Escherichia coli O6:K15:H31 (strain 536 / UPEC).